The primary structure comprises 274 residues: Energy-coupling factor transporter ATP-binding protein EcfA1 (274 aa).

The ABC transporter domain occupies 9–240 (CSFINVAFSY…EQELQKIRLD (232 aa)). Residue 41 to 48 (GHNGSGKS) participates in ATP binding.

The protein belongs to the ABC transporter superfamily. Energy-coupling factor EcfA family. In terms of assembly, forms a stable energy-coupling factor (ECF) transporter complex composed of 2 membrane-embedded substrate-binding proteins (S component), 2 ATP-binding proteins (A component) and 2 transmembrane proteins (T component).

It is found in the cell membrane. Its function is as follows. ATP-binding (A) component of a common energy-coupling factor (ECF) ABC-transporter complex. Unlike classic ABC transporters this ECF transporter provides the energy necessary to transport a number of different substrates. This is Energy-coupling factor transporter ATP-binding protein EcfA1 from Mycoplasma genitalium (strain ATCC 33530 / DSM 19775 / NCTC 10195 / G37) (Mycoplasmoides genitalium).